Reading from the N-terminus, the 222-residue chain is Small ribosomal subunit protein uS3 (222 aa).

One can recognise a KH type-2 domain in the interval 39–108; the sequence is IRKFIKKELF…NVLINIVEVK (70 aa).

This sequence belongs to the universal ribosomal protein uS3 family. As to quaternary structure, part of the 30S ribosomal subunit. Forms a tight complex with proteins S10 and S14.

Functionally, binds the lower part of the 30S subunit head. Binds mRNA in the 70S ribosome, positioning it for translation. The polypeptide is Small ribosomal subunit protein uS3 (Clostridium perfringens (strain ATCC 13124 / DSM 756 / JCM 1290 / NCIMB 6125 / NCTC 8237 / Type A)).